Consider the following 94-residue polypeptide: Co-chaperonin GroES (94 aa).

This sequence belongs to the GroES chaperonin family. As to quaternary structure, heptamer of 7 subunits arranged in a ring. Interacts with the chaperonin GroEL.

It is found in the cytoplasm. Its function is as follows. Together with the chaperonin GroEL, plays an essential role in assisting protein folding. The GroEL-GroES system forms a nano-cage that allows encapsulation of the non-native substrate proteins and provides a physical environment optimized to promote and accelerate protein folding. GroES binds to the apical surface of the GroEL ring, thereby capping the opening of the GroEL channel. The sequence is that of Co-chaperonin GroES from Heliobacterium modesticaldum (strain ATCC 51547 / Ice1).